Here is a 326-residue protein sequence, read N- to C-terminus: Aspartate carbamoyltransferase catalytic subunit (326 aa).

R55 and T56 together coordinate carbamoyl phosphate. L-aspartate is bound at residue K83. Carbamoyl phosphate contacts are provided by R105, H135, and Q138. R176 and R230 together coordinate L-aspartate. 2 residues coordinate carbamoyl phosphate: G271 and P272.

This sequence belongs to the aspartate/ornithine carbamoyltransferase superfamily. ATCase family. In terms of assembly, heterododecamer (2C3:3R2) of six catalytic PyrB chains organized as two trimers (C3), and six regulatory PyrI chains organized as three dimers (R2).

It catalyses the reaction carbamoyl phosphate + L-aspartate = N-carbamoyl-L-aspartate + phosphate + H(+). It participates in pyrimidine metabolism; UMP biosynthesis via de novo pathway; (S)-dihydroorotate from bicarbonate: step 2/3. Its function is as follows. Catalyzes the condensation of carbamoyl phosphate and aspartate to form carbamoyl aspartate and inorganic phosphate, the committed step in the de novo pyrimidine nucleotide biosynthesis pathway. In Streptomyces coelicolor (strain ATCC BAA-471 / A3(2) / M145), this protein is Aspartate carbamoyltransferase catalytic subunit.